The primary structure comprises 196 residues: GTP cyclohydrolase 1 (196 aa).

Cys86, His89, and Cys158 together coordinate Zn(2+).

This sequence belongs to the GTP cyclohydrolase I family. As to quaternary structure, homomer.

The catalysed reaction is GTP + H2O = 7,8-dihydroneopterin 3'-triphosphate + formate + H(+). Its pathway is cofactor biosynthesis; 7,8-dihydroneopterin triphosphate biosynthesis; 7,8-dihydroneopterin triphosphate from GTP: step 1/1. This Clostridium botulinum (strain Loch Maree / Type A3) protein is GTP cyclohydrolase 1.